The chain runs to 647 residues: Zinc finger CCCH domain-containing protein 19 (647 aa).

2 consecutive C3H1-type zinc fingers follow at residues 16–45 (RRRS…HSDA) and 47–73 (RMNP…HPPL). Residues 78–106 (GAPTTPRTSQQSAPQVSVPAQAPVPNPAS) form a disordered region. Positions 86-106 (SQQSAPQVSVPAQAPVPNPAS) are enriched in low complexity. A C3H1-type 3 zinc finger spans residues 109–136 (AKQGVPCYYFQKGMCVKGDRCAFLHLPQ). Disordered stretches follow at residues 155–280 (VPHP…RTNG), 308–327 (LSES…DSSD), 335–452 (QRRL…DAES), 512–580 (LKRK…LSPA), and 586–605 (EAAD…ETAE). Polar residues-rich tracts occupy residues 160–175 (LKNS…QQNA) and 189–203 (NGKT…NRAG). Basic and acidic residues predominate over residues 267-280 (SLREDRGAYRRTNG). Basic and acidic residues predominate over residues 347–359 (SDRHNVYPEDERH). A compositionally biased stretch (polar residues) spans 369–379 (QASNDGVSSSR). A compositionally biased stretch (basic and acidic residues) spans 419–433 (LRGKLHDRLKAKPNE). The segment covering 435–445 (VSGNVQSSLSK) has biased composition (polar residues). Residues 527 to 536 (GSKREEHSGG) show a composition bias toward basic and acidic residues.

The chain is Zinc finger CCCH domain-containing protein 19 from Oryza sativa subsp. japonica (Rice).